Consider the following 692-residue polypeptide: Elongation factor G (692 aa).

Residues 8–282 (EKTRNIGIMA…AVVEYMPAPT (275 aa)) form the tr-type G domain. Residues 17-24 (AHIDAGKT), 81-85 (DTPGH), and 135-138 (NKMD) each bind GTP. The tract at residues 285–304 (PNIKGVHPETGEADERHSSD) is disordered. The span at 290 to 304 (VHPETGEADERHSSD) shows a compositional bias: basic and acidic residues.

The protein belongs to the TRAFAC class translation factor GTPase superfamily. Classic translation factor GTPase family. EF-G/EF-2 subfamily.

Its subcellular location is the cytoplasm. Functionally, catalyzes the GTP-dependent ribosomal translocation step during translation elongation. During this step, the ribosome changes from the pre-translocational (PRE) to the post-translocational (POST) state as the newly formed A-site-bound peptidyl-tRNA and P-site-bound deacylated tRNA move to the P and E sites, respectively. Catalyzes the coordinated movement of the two tRNA molecules, the mRNA and conformational changes in the ribosome. The polypeptide is Elongation factor G (Desulfitobacterium hafniense (strain DSM 10664 / DCB-2)).